The primary structure comprises 215 residues: ATP-dependent Clp protease proteolytic subunit 1 (215 aa).

Residue Ser-108 is the Nucleophile of the active site. His-133 is a catalytic residue.

It belongs to the peptidase S14 family. Fourteen ClpP subunits assemble into 2 heptameric rings which stack back to back to give a disk-like structure with a central cavity, resembling the structure of eukaryotic proteasomes.

The protein localises to the cytoplasm. It carries out the reaction Hydrolysis of proteins to small peptides in the presence of ATP and magnesium. alpha-casein is the usual test substrate. In the absence of ATP, only oligopeptides shorter than five residues are hydrolyzed (such as succinyl-Leu-Tyr-|-NHMec, and Leu-Tyr-Leu-|-Tyr-Trp, in which cleavage of the -Tyr-|-Leu- and -Tyr-|-Trp bonds also occurs).. Its function is as follows. Cleaves peptides in various proteins in a process that requires ATP hydrolysis. Has a chymotrypsin-like activity. Plays a major role in the degradation of misfolded proteins. The sequence is that of ATP-dependent Clp protease proteolytic subunit 1 from Paraburkholderia xenovorans (strain LB400).